We begin with the raw amino-acid sequence, 161 residues long: Putative sporulation sigma factor-processing peptidase (161 aa).

Asp38 is an active-site residue.

The protein belongs to the peptidase U4 family.

In terms of biological role, probably activates the RNA polymerase sigma-35 factor at the stage II of sporulation. This Bacillus thuringiensis subsp. kurstaki protein is Putative sporulation sigma factor-processing peptidase.